The chain runs to 314 residues: DNA-directed RNA polymerase subunit alpha (314 aa).

Residues 1-228 (MIEIEKPKIE…EHLSIFVNLT (228 aa)) form an alpha N-terminal domain (alpha-NTD) region. The interval 245–314 (KEKVLEMTIE…DLGLSLRNEN (70 aa)) is alpha C-terminal domain (alpha-CTD).

This sequence belongs to the RNA polymerase alpha chain family. Homodimer. The RNAP catalytic core consists of 2 alpha, 1 beta, 1 beta' and 1 omega subunit. When a sigma factor is associated with the core the holoenzyme is formed, which can initiate transcription.

It catalyses the reaction RNA(n) + a ribonucleoside 5'-triphosphate = RNA(n+1) + diphosphate. Functionally, DNA-dependent RNA polymerase catalyzes the transcription of DNA into RNA using the four ribonucleoside triphosphates as substrates. This Listeria innocua serovar 6a (strain ATCC BAA-680 / CLIP 11262) protein is DNA-directed RNA polymerase subunit alpha.